The primary structure comprises 375 residues: Lipid-A-disaccharide synthase (375 aa).

Belongs to the LpxB family.

It catalyses the reaction a lipid X + a UDP-2-N,3-O-bis[(3R)-3-hydroxyacyl]-alpha-D-glucosamine = a lipid A disaccharide + UDP + H(+). It participates in bacterial outer membrane biogenesis; LPS lipid A biosynthesis. In terms of biological role, condensation of UDP-2,3-diacylglucosamine and 2,3-diacylglucosamine-1-phosphate to form lipid A disaccharide, a precursor of lipid A, a phosphorylated glycolipid that anchors the lipopolysaccharide to the outer membrane of the cell. This is Lipid-A-disaccharide synthase from Pseudomonas putida (strain GB-1).